The primary structure comprises 345 residues: NADH-ubiquinone oxidoreductase chain 2 (345 aa).

Helical transmembrane passes span 1-21 (MNPI…VLTM), 60-80 (FLIQ…NAHL), 110-130 (PIHF…ALII), 149-169 (IPTP…GLGG), 179-196 (MAFS…IITI), 200-222 (LTLF…MHLT), 240-260 (TANL…LSGF), 274-294 (NLVP…MFYL), and 323-343 (TTML…TPTM).

This sequence belongs to the complex I subunit 2 family.

It localises to the mitochondrion inner membrane. The catalysed reaction is a ubiquinone + NADH + 5 H(+)(in) = a ubiquinol + NAD(+) + 4 H(+)(out). Functionally, core subunit of the mitochondrial membrane respiratory chain NADH dehydrogenase (Complex I) that is believed to belong to the minimal assembly required for catalysis. Complex I functions in the transfer of electrons from NADH to the respiratory chain. The immediate electron acceptor for the enzyme is believed to be ubiquinone. This chain is NADH-ubiquinone oxidoreductase chain 2 (MT-ND2), found in Varanus melinus (Quince monitor lizard).